The sequence spans 122 residues: Small ribosomal subunit protein uS13 (122 aa).

The segment at 95–122 is disordered; that stretch reads GLPVRGQKTKTNARTRKGPKRTVANKKK.

It belongs to the universal ribosomal protein uS13 family. As to quaternary structure, part of the 30S ribosomal subunit. Forms a loose heterodimer with protein S19. Forms two bridges to the 50S subunit in the 70S ribosome.

Located at the top of the head of the 30S subunit, it contacts several helices of the 16S rRNA. In the 70S ribosome it contacts the 23S rRNA (bridge B1a) and protein L5 of the 50S subunit (bridge B1b), connecting the 2 subunits; these bridges are implicated in subunit movement. Contacts the tRNAs in the A and P-sites. The sequence is that of Small ribosomal subunit protein uS13 from Agathobacter rectalis (strain ATCC 33656 / DSM 3377 / JCM 17463 / KCTC 5835 / VPI 0990) (Eubacterium rectale).